We begin with the raw amino-acid sequence, 271 residues long: Glutamate racemase 3 (271 aa).

Residues 15 to 16 and 47 to 48 contribute to the substrate site; these read DS and YG. The Proton donor/acceptor role is filled by cysteine 78. Residue 79-80 coordinates substrate; the sequence is NT. Residue cysteine 185 is the Proton donor/acceptor of the active site. Residue 186-187 coordinates substrate; the sequence is TH.

The protein belongs to the aspartate/glutamate racemases family.

It carries out the reaction L-glutamate = D-glutamate. It participates in cell wall biogenesis; peptidoglycan biosynthesis. Functionally, provides the (R)-glutamate required for cell wall biosynthesis. The sequence is that of Glutamate racemase 3 from Caldanaerobacter subterraneus subsp. tengcongensis (strain DSM 15242 / JCM 11007 / NBRC 100824 / MB4) (Thermoanaerobacter tengcongensis).